The primary structure comprises 700 residues: Acyl-coenzyme A oxidase 2 (700 aa).

It belongs to the acyl-CoA oxidase family. As to quaternary structure, heteropentamer composed of five different subunits. FAD serves as cofactor.

The protein resides in the peroxisome. The catalysed reaction is a 2,3-saturated acyl-CoA + O2 = a (2E)-enoyl-CoA + H2O2. It functions in the pathway lipid metabolism; peroxisomal fatty acid beta-oxidation. Its function is as follows. Oxidizes strain chain acyl-CoAs with a chain length of 10 to 14 carbons. Also active toward the 2S isomers of acyl-CoA-esters containing a 2-methyl group. In Yarrowia lipolytica (strain CLIB 122 / E 150) (Yeast), this protein is Acyl-coenzyme A oxidase 2 (POX2).